A 173-amino-acid polypeptide reads, in one-letter code: Peptide deformylase (173 aa).

Fe cation-binding residues include cysteine 98 and histidine 140. Glutamate 141 is an active-site residue. Histidine 144 contacts Fe cation.

Belongs to the polypeptide deformylase family. Fe(2+) is required as a cofactor.

The catalysed reaction is N-terminal N-formyl-L-methionyl-[peptide] + H2O = N-terminal L-methionyl-[peptide] + formate. Functionally, removes the formyl group from the N-terminal Met of newly synthesized proteins. Requires at least a dipeptide for an efficient rate of reaction. N-terminal L-methionine is a prerequisite for activity but the enzyme has broad specificity at other positions. This Caulobacter sp. (strain K31) protein is Peptide deformylase.